A 289-amino-acid chain; its full sequence is tRNA-cytidine(32) 2-sulfurtransferase (289 aa).

The PP-loop motif motif lies at 49–54; that stretch reads SGGKDS. [4Fe-4S] cluster-binding residues include Cys124, Cys127, and Cys215.

The protein belongs to the TtcA family. As to quaternary structure, homodimer. Requires Mg(2+) as cofactor. The cofactor is [4Fe-4S] cluster.

It localises to the cytoplasm. The enzyme catalyses cytidine(32) in tRNA + S-sulfanyl-L-cysteinyl-[cysteine desulfurase] + AH2 + ATP = 2-thiocytidine(32) in tRNA + L-cysteinyl-[cysteine desulfurase] + A + AMP + diphosphate + H(+). It functions in the pathway tRNA modification. In terms of biological role, catalyzes the ATP-dependent 2-thiolation of cytidine in position 32 of tRNA, to form 2-thiocytidine (s(2)C32). The sulfur atoms are provided by the cysteine/cysteine desulfurase (IscS) system. The protein is tRNA-cytidine(32) 2-sulfurtransferase of Methylococcus capsulatus (strain ATCC 33009 / NCIMB 11132 / Bath).